Reading from the N-terminus, the 237-residue chain is NAD-dependent protein deacylase (237 aa).

The region spanning 1-235 (MRVVVLSGAG…PGLLQRLPAL (235 aa)) is the Deacetylase sirtuin-type domain. An NAD(+)-binding site is contributed by 8–28 (GAGISAESDVPTFRDDKNGLW). Residues Tyr-53 and Arg-56 each coordinate substrate. Position 86–89 (86–89 (QNVD)) interacts with NAD(+). His-104 functions as the Proton acceptor in the catalytic mechanism. The Zn(2+) site is built by Cys-112, Cys-115, Cys-138, and Cys-140. Residues 177 to 179 (GTS), 203 to 205 (NPE), and Ala-221 each bind NAD(+).

This sequence belongs to the sirtuin family. Class III subfamily. The cofactor is Zn(2+).

The protein localises to the cytoplasm. It catalyses the reaction N(6)-acetyl-L-lysyl-[protein] + NAD(+) + H2O = 2''-O-acetyl-ADP-D-ribose + nicotinamide + L-lysyl-[protein]. It carries out the reaction N(6)-succinyl-L-lysyl-[protein] + NAD(+) + H2O = 2''-O-succinyl-ADP-D-ribose + nicotinamide + L-lysyl-[protein]. NAD-dependent lysine deacetylase and desuccinylase that specifically removes acetyl and succinyl groups on target proteins. Modulates the activities of several proteins which are inactive in their acylated form. In Mycobacterium leprae (strain TN), this protein is NAD-dependent protein deacylase.